The sequence spans 259 residues: BTB/POZ domain-containing protein KCTD4 (259 aa).

In terms of domain architecture, BTB spans 33-134 (TLMTLNVGGY…EVKSRWEKEQ (102 aa)).

The chain is BTB/POZ domain-containing protein KCTD4 (Kctd4) from Mus musculus (Mouse).